We begin with the raw amino-acid sequence, 543 residues long: Hydroxylamine reductase (543 aa).

[4Fe-4S] cluster contacts are provided by cysteine 5, cysteine 8, cysteine 17, and cysteine 23. Hybrid [4Fe-2O-2S] cluster is bound by residues histidine 236, glutamate 260, cysteine 304, cysteine 398, cysteine 426, cysteine 451, glutamate 486, and lysine 488. Position 398 is a cysteine persulfide (cysteine 398).

Belongs to the HCP family. [4Fe-4S] cluster serves as cofactor. The cofactor is hybrid [4Fe-2O-2S] cluster.

Its subcellular location is the cytoplasm. The enzyme catalyses A + NH4(+) + H2O = hydroxylamine + AH2 + H(+). Catalyzes the reduction of hydroxylamine to form NH(3) and H(2)O. The polypeptide is Hydroxylamine reductase (Bacteroides fragilis (strain YCH46)).